The primary structure comprises 462 residues: Exodeoxyribonuclease 7 large subunit (462 aa).

The protein belongs to the XseA family. As to quaternary structure, heterooligomer composed of large and small subunits.

It is found in the cytoplasm. It catalyses the reaction Exonucleolytic cleavage in either 5'- to 3'- or 3'- to 5'-direction to yield nucleoside 5'-phosphates.. In terms of biological role, bidirectionally degrades single-stranded DNA into large acid-insoluble oligonucleotides, which are then degraded further into small acid-soluble oligonucleotides. In Pectobacterium atrosepticum (strain SCRI 1043 / ATCC BAA-672) (Erwinia carotovora subsp. atroseptica), this protein is Exodeoxyribonuclease 7 large subunit.